The primary structure comprises 292 residues: ATP synthase gamma chain (292 aa).

Belongs to the ATPase gamma chain family. As to quaternary structure, F-type ATPases have 2 components, CF(1) - the catalytic core - and CF(0) - the membrane proton channel. CF(1) has five subunits: alpha(3), beta(3), gamma(1), delta(1), epsilon(1). CF(0) has three main subunits: a, b and c.

Its subcellular location is the cell inner membrane. Functionally, produces ATP from ADP in the presence of a proton gradient across the membrane. The gamma chain is believed to be important in regulating ATPase activity and the flow of protons through the CF(0) complex. The chain is ATP synthase gamma chain from Brucella ovis (strain ATCC 25840 / 63/290 / NCTC 10512).